Reading from the N-terminus, the 192-residue chain is MSNTIKMVVGLGNPGKEYEQTRHNAGFWFLDELAWKWKASFKEEKKFFGEVARATLPDGDVWLLKPTTFMNRSGQAVAALAQFYKIKPEEILVVHDELDIPCGRIKFKLGGGNGGHNGLKDIQAKLGTADYYRLRLGIGHPGDRNLVVGYVLNKPSTEHRRQIDDAVAKSLQAIPDILAGKCEEATRFLHSK.

Tyr-18 contributes to the tRNA binding site. Residue His-23 is the Proton acceptor of the active site. Positions 69, 71, and 117 each coordinate tRNA.

This sequence belongs to the PTH family. As to quaternary structure, monomer.

It localises to the cytoplasm. It carries out the reaction an N-acyl-L-alpha-aminoacyl-tRNA + H2O = an N-acyl-L-amino acid + a tRNA + H(+). Its function is as follows. Hydrolyzes ribosome-free peptidyl-tRNAs (with 1 or more amino acids incorporated), which drop off the ribosome during protein synthesis, or as a result of ribosome stalling. Functionally, catalyzes the release of premature peptidyl moieties from peptidyl-tRNA molecules trapped in stalled 50S ribosomal subunits, and thus maintains levels of free tRNAs and 50S ribosomes. The sequence is that of Peptidyl-tRNA hydrolase from Neisseria meningitidis serogroup A / serotype 4A (strain DSM 15465 / Z2491).